The primary structure comprises 1161 residues: Perforin-like protein 1 (1161 aa).

A helical transmembrane segment spans residues 67-86 (LWITFVCLLTLHMFGLSSAV). Residues 154–329 (PEALNEVPTK…LGDSSALDLF (176 aa)) form a disordered region. Composition is skewed to basic and acidic residues over residues 162–177 (TKVE…DKTE) and 184–194 (ADHKSLLEGRS). The span at 201–211 (PDDDFDFLFED) shows a compositional bias: acidic residues. Positions 222-234 (NKGTSSDETSPGD) are enriched in polar residues. Positions 238 to 249 (GEGSSASDSLLS) are enriched in low complexity. Asparagine 257 carries an N-linked (GlcNAc...) asparagine glycan. Over residues 264 to 283 (NQKRITHPKSKAQHQKKVTK) the composition is skewed to basic residues. Positions 309 to 322 (NTQADDSQRQSLGD) are enriched in polar residues. The N-linked (GlcNAc...) asparagine glycan is linked to asparagine 344. Residues 353 to 381 (AANDGGLFSSSGMGPTGASDETSANPLGS) are disordered. The span at 361 to 378 (SSSGMGPTGASDETSANP) shows a compositional bias: polar residues. In terms of domain architecture, MACPF spans 463-817 (LSAVYTKATK…LTPQDLSALT (355 aa)). Cysteine 539 and cysteine 602 form a disulfide bridge. A glycan (N-linked (GlcNAc...) asparagine) is linked at asparagine 550. The chain crosses the membrane as a beta stranded span at residues 554-589 (YQNELSVDASLQGGDPIGLNSFSASTGYRDFAKEVS). Residue asparagine 618 is glycosylated (N-linked (GlcNAc...) asparagine). Cysteines 643 and 657 form a disulfide. Residues 694-740 (RSEVEKMRNMGIDVKTQLKMQLGGVSGGAGQGTSSKKNQSSSEYQMN) traverse the membrane as a beta stranded segment. The tract at residues 716 to 736 (GGVSGGAGQGTSSKKNQSSSE) is disordered. An N-linked (GlcNAc...) asparagine glycan is attached at asparagine 755. Intrachain disulfides connect cysteine 845-cysteine 900, cysteine 874-cysteine 881, cysteine 928-cysteine 981, cysteine 957-cysteine 964, cysteine 1019-cysteine 1080, and cysteine 1047-cysteine 1054. Residues asparagine 1022, asparagine 1050, and asparagine 1111 are each glycosylated (N-linked (GlcNAc...) asparagine). Residues 1094 to 1149 (VGKAKGNGKKKKGKKGKNKTNAPNEVEEGQQLGADSPSQVSVPADADSGPTSKTMS) are disordered. The span at 1099–1111 (GNGKKKKGKKGKN) shows a compositional bias: basic residues.

This sequence belongs to the MPEG1 family. As to quaternary structure, homooligomer; forms a homooligomeric pore.

Its subcellular location is the parasitophorous vacuole membrane. The protein resides in the cytoplasmic vesicle. It localises to the secretory vesicle. It is found in the microneme membrane. Functionally, pore-forming protein that promotes parasite exit from host cells: mediates formation of a pore in the parasitophorous vacuolar membrane, leading to membrane permeabilization, thereby facilitating parasite egress from host cells. May also form a pore in the host plasma membrane. Preferentially binds inner leaflet lipids, such as phosphatidylethanolamine (PE) or phosphatidylserine (PS). In Toxoplasma gondii (strain ATCC 50861 / VEG), this protein is Perforin-like protein 1.